Consider the following 415-residue polypeptide: Serine hydroxymethyltransferase (415 aa).

Residues L117 and G121–L123 contribute to the (6S)-5,6,7,8-tetrahydrofolate site. Residue K226 is modified to N6-(pyridoxal phosphate)lysine. Residue E241 coordinates (6S)-5,6,7,8-tetrahydrofolate.

The protein belongs to the SHMT family. As to quaternary structure, homodimer. Pyridoxal 5'-phosphate serves as cofactor.

It is found in the cytoplasm. The enzyme catalyses (6R)-5,10-methylene-5,6,7,8-tetrahydrofolate + glycine + H2O = (6S)-5,6,7,8-tetrahydrofolate + L-serine. It functions in the pathway one-carbon metabolism; tetrahydrofolate interconversion. Its pathway is amino-acid biosynthesis; glycine biosynthesis; glycine from L-serine: step 1/1. In terms of biological role, catalyzes the reversible interconversion of serine and glycine with tetrahydrofolate (THF) serving as the one-carbon carrier. This reaction serves as the major source of one-carbon groups required for the biosynthesis of purines, thymidylate, methionine, and other important biomolecules. Also exhibits THF-independent aldolase activity toward beta-hydroxyamino acids, producing glycine and aldehydes, via a retro-aldol mechanism. This chain is Serine hydroxymethyltransferase, found in Bacillus subtilis (strain 168).